The primary structure comprises 224 residues: UPF0758 protein lin1584 (224 aa).

In terms of domain architecture, MPN spans 102 to 224 (VIRCPEDAVK…YISLKEKGYF (123 aa)). His173, His175, and Asp186 together coordinate Zn(2+). A JAMM motif motif is present at residues 173–186 (HNHPSGDPAPSSED).

Belongs to the UPF0758 family.

The sequence is that of UPF0758 protein lin1584 from Listeria innocua serovar 6a (strain ATCC BAA-680 / CLIP 11262).